Here is a 377-residue protein sequence, read N- to C-terminus: ATP-dependent (S)-NAD(P)H-hydrate dehydratase (377 aa).

Positions leucine 10–leucine 366 constitute a YjeF C-terminal domain. (6S)-NADPHX is bound by residues glycine 148 and asparagine 201–arginine 207. Residues lysine 245–aspartate 249 and glycine 264–glycine 273 each bind ATP. Residue aspartate 274 coordinates (6S)-NADPHX.

The protein belongs to the NnrD/CARKD family. The cofactor is Mg(2+).

It is found in the cytoplasm. The catalysed reaction is (6S)-NADHX + ATP = ADP + phosphate + NADH + H(+). It catalyses the reaction (6S)-NADPHX + ATP = ADP + phosphate + NADPH + H(+). Functionally, catalyzes the dehydration of the S-form of NAD(P)HX at the expense of ATP, which is converted to ADP. Together with NAD(P)HX epimerase, which catalyzes the epimerization of the S- and R-forms, the enzyme allows the repair of both epimers of NAD(P)HX, a damaged form of NAD(P)H that is a result of enzymatic or heat-dependent hydration. The polypeptide is ATP-dependent (S)-NAD(P)H-hydrate dehydratase (Candida albicans (strain SC5314 / ATCC MYA-2876) (Yeast)).